We begin with the raw amino-acid sequence, 98 residues long: Large ribosomal subunit protein bL21 (98 aa).

It belongs to the bacterial ribosomal protein bL21 family. As to quaternary structure, part of the 50S ribosomal subunit. Contacts protein L20.

This protein binds to 23S rRNA in the presence of protein L20. The chain is Large ribosomal subunit protein bL21 from Aquifex aeolicus (strain VF5).